Here is a 204-residue protein sequence, read N- to C-terminus: UPF0637 protein SaurJH9_1166 (204 aa).

The protein belongs to the UPF0637 family.

In Staphylococcus aureus (strain JH9), this protein is UPF0637 protein SaurJH9_1166.